A 160-amino-acid chain; its full sequence is Ribosomal RNA large subunit methyltransferase H (160 aa).

Positions 76 and 108 each coordinate S-adenosyl-L-methionine.

Belongs to the RNA methyltransferase RlmH family. Homodimer.

It localises to the cytoplasm. It catalyses the reaction pseudouridine(1915) in 23S rRNA + S-adenosyl-L-methionine = N(3)-methylpseudouridine(1915) in 23S rRNA + S-adenosyl-L-homocysteine + H(+). Specifically methylates the pseudouridine at position 1915 (m3Psi1915) in 23S rRNA. In Xanthobacter autotrophicus (strain ATCC BAA-1158 / Py2), this protein is Ribosomal RNA large subunit methyltransferase H.